Here is a 225-residue protein sequence, read N- to C-terminus: ATP synthase F(0) complex subunit a (225 aa).

6 consecutive transmembrane segments (helical) span residues 10-30 (PSLLGISLLMPALLMTTILLL), 69-89 (LILISLLILLSLTNLLGLLPY), 96-116 (QLSMNMAIALPLWLVTVLIGL), 135-155 (LLIPILILIETISLLIRPIAL), 168-188 (LLIQLISIATLNLWFMMPPLS), and 194-214 (VLILLLLLEFAVAMIQAYVFV).

This sequence belongs to the ATPase A chain family. In terms of assembly, component of the ATP synthase complex composed at least of ATP5F1A/subunit alpha, ATP5F1B/subunit beta, ATP5MC1/subunit c (homooctomer), MT-ATP6/subunit a, MT-ATP8/subunit 8, ATP5ME/subunit e, ATP5MF/subunit f, ATP5MG/subunit g, ATP5MK/subunit k, ATP5MJ/subunit j, ATP5F1C/subunit gamma, ATP5F1D/subunit delta, ATP5F1E/subunit epsilon, ATP5PF/subunit F6, ATP5PB/subunit b, ATP5PD/subunit d, ATP5PO/subunit OSCP. ATP synthase complex consists of a soluble F(1) head domain (subunits alpha(3) and beta(3)) - the catalytic core - and a membrane F(0) domain - the membrane proton channel (subunits c, a, 8, e, f, g, k and j). These two domains are linked by a central stalk (subunits gamma, delta, and epsilon) rotating inside the F1 region and a stationary peripheral stalk (subunits F6, b, d, and OSCP). Interacts with DNAJC30; interaction is direct.

It localises to the mitochondrion inner membrane. The enzyme catalyses H(+)(in) = H(+)(out). Subunit a, of the mitochondrial membrane ATP synthase complex (F(1)F(0) ATP synthase or Complex V) that produces ATP from ADP in the presence of a proton gradient across the membrane which is generated by electron transport complexes of the respiratory chain. ATP synthase complex consist of a soluble F(1) head domain - the catalytic core - and a membrane F(1) domain - the membrane proton channel. These two domains are linked by a central stalk rotating inside the F(1) region and a stationary peripheral stalk. During catalysis, ATP synthesis in the catalytic domain of F(1) is coupled via a rotary mechanism of the central stalk subunits to proton translocation. With the subunit c (ATP5MC1), forms the proton-conducting channel in the F(0) domain, that contains two crucial half-channels (inlet and outlet) that facilitate proton movement from the mitochondrial intermembrane space (IMS) into the matrix. Protons are taken up via the inlet half-channel and released through the outlet half-channel, following a Grotthuss mechanism. This Alligator mississippiensis (American alligator) protein is ATP synthase F(0) complex subunit a.